Consider the following 429-residue polypeptide: MFKRIALVCALFSGVCFAEGKQLLDKVVAIVNDNVITSSELNAQVELSKKQIIAQNMQMPDESVLRKQVLQHLIDVDLEMQMAKQNGITIENAEIDEAIEKIAASNHLNLSQMRDEITKQGISWQEYRQNIRKEMLISRVQQKAVGKDIIVTNEQVDQYLKTAGRIENSNLTYHLKNIVIPLSEEPTTRQLQRAKIEAENLLNKIKKGEDFSRLAIEESSGEFALEGGDLGERHLAELPEVFAKEVVHMKVGQVAGPIRAGNGFHLIKLVAVGGENQRHVITQTHVRHILLKPDASMVPSEAIKQVNNIYRQIQSGKDFALMAKQYSLDAASAVKGGDLGWVNPGELVPEFEKTMNSLPLHKVSKPVKTQYGWHLIEVIARRQKDDSEAFKKQQVRQFLQQRKFVEAVQNWQQHLRSQAYINIVDKDLA.

The signal sequence occupies residues 1 to 18 (MFKRIALVCALFSGVCFA). PpiC domains lie at 170–271 (NLTY…KLVA) and 281–380 (ITQT…EVIA).

The protein resides in the periplasm. The enzyme catalyses [protein]-peptidylproline (omega=180) = [protein]-peptidylproline (omega=0). Functionally, chaperone involved in the correct folding and assembly of outer membrane proteins. Recognizes specific patterns of aromatic residues and the orientation of their side chains, which are found more frequently in integral outer membrane proteins. May act in both early periplasmic and late outer membrane-associated steps of protein maturation. This chain is Chaperone SurA, found in Legionella pneumophila (strain Lens).